A 297-amino-acid polypeptide reads, in one-letter code: Inosose dehydratase (297 aa).

The protein belongs to the IolE/MocC family. Glutathione is required as a cofactor. The cofactor is Co(2+). It depends on Mn(2+) as a cofactor.

The catalysed reaction is scyllo-inosose = 3D-3,5/4-trihydroxycyclohexane-1,2-dione + H2O. It participates in polyol metabolism; myo-inositol degradation into acetyl-CoA; acetyl-CoA from myo-inositol: step 2/7. In terms of biological role, catalyzes the dehydration of inosose (2-keto-myo-inositol, 2KMI or 2,4,6/3,5-pentahydroxycyclohexanone) to 3D-(3,5/4)-trihydroxycyclohexane-1,2-dione (D-2,3-diketo-4-deoxy-epi-inositol). This Clostridium perfringens (strain ATCC 13124 / DSM 756 / JCM 1290 / NCIMB 6125 / NCTC 8237 / Type A) protein is Inosose dehydratase.